Reading from the N-terminus, the 1381-residue chain is Major capsid protein (1381 aa).

This sequence belongs to the herpesviridae major capsid protein family. As to quaternary structure, homomultimer. Makes the hexons and eleven out of twelve pentons. Interacts with triplex proteins 1/TRX1 and 2/TRX2; adjacent capsomers are linked together in groups of three by triplexes, heterotrimeric complexes composed of one molecule of TRX1 and two molecules of TRX2. Interacts with scaffold protein; this interaction allows efficient MCP transport to the host nucleus. Interacts with capsid vertex component 2/CVC2. Interacts with the small capsomere-interacting protein/SCP.

It localises to the virion. Its subcellular location is the host nucleus. Functionally, self-assembles to form an icosahedral capsid with a T=16 symmetry, about 200 nm in diameter, and consisting of 150 hexons and 12 pentons (total of 162 capsomers). Hexons form the edges and faces of the capsid and are each composed of six MCP molecules. In contrast, one penton is found at each of the 12 vertices. Eleven of the pentons are MCP pentamers, while the last vertex is occupied by the portal complex. The capsid is surrounded by a layer of proteinaceous material designated the tegument which, in turn, is enclosed in an envelope of host cell-derived lipids containing virus-encoded glycoproteins. The sequence is that of Major capsid protein from Epstein-Barr virus (strain B95-8) (HHV-4).